A 397-amino-acid polypeptide reads, in one-letter code: Succinate--CoA ligase [ADP-forming] subunit beta (397 aa).

One can recognise an ATP-grasp domain in the interval 9–254 (KALLKGYGAP…ETEEDAKEIE (246 aa)). ATP is bound by residues Lys46, 53-55 (GRG), Glu109, Ala112, and Glu117. 2 residues coordinate Mg(2+): Asn209 and Asp223. Substrate is bound by residues Asn274 and 331–333 (GIM).

Belongs to the succinate/malate CoA ligase beta subunit family. In terms of assembly, heterotetramer of two alpha and two beta subunits. The cofactor is Mg(2+).

The enzyme catalyses succinate + ATP + CoA = succinyl-CoA + ADP + phosphate. It catalyses the reaction GTP + succinate + CoA = succinyl-CoA + GDP + phosphate. The protein operates within carbohydrate metabolism; tricarboxylic acid cycle; succinate from succinyl-CoA (ligase route): step 1/1. Its function is as follows. Succinyl-CoA synthetase functions in the citric acid cycle (TCA), coupling the hydrolysis of succinyl-CoA to the synthesis of either ATP or GTP and thus represents the only step of substrate-level phosphorylation in the TCA. The beta subunit provides nucleotide specificity of the enzyme and binds the substrate succinate, while the binding sites for coenzyme A and phosphate are found in the alpha subunit. In Agrobacterium fabrum (strain C58 / ATCC 33970) (Agrobacterium tumefaciens (strain C58)), this protein is Succinate--CoA ligase [ADP-forming] subunit beta.